Reading from the N-terminus, the 482-residue chain is Adenylosuccinate lyase (482 aa).

Substrate is bound by residues 14–15 (RY), 82–84 (RHD), and 108–109 (TS). The Proton donor/acceptor role is filled by His156. A Glycyl lysine isopeptide (Lys-Gly) (interchain with G-Cter in ubiquitin) cross-link involves residue Lys196. Residue Gln238 participates in substrate binding. The active-site Proton donor/acceptor is Ser286. Substrate is bound by residues Arg300, Arg326, Ser331, and Arg335.

This sequence belongs to the lyase 1 family. Adenylosuccinate lyase subfamily. Homotetramer. Residues from neighboring subunits contribute catalytic and substrate-binding residues to each active site.

The catalysed reaction is N(6)-(1,2-dicarboxyethyl)-AMP = fumarate + AMP. The enzyme catalyses (2S)-2-[5-amino-1-(5-phospho-beta-D-ribosyl)imidazole-4-carboxamido]succinate = 5-amino-1-(5-phospho-beta-D-ribosyl)imidazole-4-carboxamide + fumarate. It participates in purine metabolism; AMP biosynthesis via de novo pathway; AMP from IMP: step 2/2. Its pathway is purine metabolism; IMP biosynthesis via de novo pathway; 5-amino-1-(5-phospho-D-ribosyl)imidazole-4-carboxamide from 5-amino-1-(5-phospho-D-ribosyl)imidazole-4-carboxylate: step 2/2. The protein is Adenylosuccinate lyase (ADE13) of Saccharomyces cerevisiae (strain ATCC 204508 / S288c) (Baker's yeast).